The following is a 214-amino-acid chain: Threonylcarbamoyl-AMP synthase (214 aa).

The YrdC-like domain maps to Thr-9 to Arg-214.

Belongs to the SUA5 family. TsaC subfamily.

Its subcellular location is the cytoplasm. The catalysed reaction is L-threonine + hydrogencarbonate + ATP = L-threonylcarbamoyladenylate + diphosphate + H2O. Required for the formation of a threonylcarbamoyl group on adenosine at position 37 (t(6)A37) in tRNAs that read codons beginning with adenine. Catalyzes the conversion of L-threonine, HCO(3)(-)/CO(2) and ATP to give threonylcarbamoyl-AMP (TC-AMP) as the acyladenylate intermediate, with the release of diphosphate. This chain is Threonylcarbamoyl-AMP synthase, found in Psychrobacter arcticus (strain DSM 17307 / VKM B-2377 / 273-4).